Here is a 226-residue protein sequence, read N- to C-terminus: PKHD-type hydroxylase Abu_0724 (226 aa).

The 101-residue stretch at 78-178 (HIISPFFNKY…RMVSFMWIQS (101 aa)) folds into the Fe2OG dioxygenase domain. Positions 96, 98, and 159 each coordinate Fe cation. Position 169 (R169) interacts with 2-oxoglutarate.

The cofactor is Fe(2+). L-ascorbate is required as a cofactor.

The chain is PKHD-type hydroxylase Abu_0724 from Aliarcobacter butzleri (strain RM4018) (Arcobacter butzleri).